Consider the following 122-residue polypeptide: Large ribosomal subunit protein bL12 (122 aa).

This sequence belongs to the bacterial ribosomal protein bL12 family. In terms of assembly, homodimer. Part of the ribosomal stalk of the 50S ribosomal subunit. Forms a multimeric L10(L12)X complex, where L10 forms an elongated spine to which 2 to 4 L12 dimers bind in a sequential fashion. Binds GTP-bound translation factors.

Forms part of the ribosomal stalk which helps the ribosome interact with GTP-bound translation factors. Is thus essential for accurate translation. In Buchnera aphidicola subsp. Baizongia pistaciae (strain Bp), this protein is Large ribosomal subunit protein bL12.